A 416-amino-acid polypeptide reads, in one-letter code: Gamma-glutamyl phosphate reductase (416 aa).

This sequence belongs to the gamma-glutamyl phosphate reductase family.

The protein resides in the cytoplasm. It carries out the reaction L-glutamate 5-semialdehyde + phosphate + NADP(+) = L-glutamyl 5-phosphate + NADPH + H(+). The protein operates within amino-acid biosynthesis; L-proline biosynthesis; L-glutamate 5-semialdehyde from L-glutamate: step 2/2. Functionally, catalyzes the NADPH-dependent reduction of L-glutamate 5-phosphate into L-glutamate 5-semialdehyde and phosphate. The product spontaneously undergoes cyclization to form 1-pyrroline-5-carboxylate. This chain is Gamma-glutamyl phosphate reductase, found in Leptospira interrogans serogroup Icterohaemorrhagiae serovar Lai (strain 56601).